Consider the following 941-residue polypeptide: Myosin heavy chain kinase D (941 aa).

The stretch at 8 to 48 forms a coiled coil; it reads KLSKKIEKILEKNDYLKKKVEQLTKSVDNHEFKIQELLLLL. Low complexity-rich tracts occupy residues 57–70, 84–115, and 124–206; these read TTTT…NNST, TSTD…TTTS, and NSNN…PQLS. Disordered regions lie at residues 57 to 234 and 276 to 310; these read TTTT…KEDS and SSNN…QQQQ. A coiled-coil region spans residues 289 to 317; the sequence is SILNDQQNQQQNQQQQNQQQQQEEINFIT. The Alpha-type protein kinase domain maps to 337 to 582; sequence EYSANDDEWT…ICLQFGLPPI (246 aa). WD repeat units lie at residues 635 to 674, 683 to 720, 741 to 780, 783 to 820, 824 to 861, 864 to 902, and 909 to 941; these read GHDE…DLSK, AHRR…TTTT, DHTA…CIKS, AHGK…CVYG, AHDA…PTTT, QHNM…EPIK, and AHRS…WKNK.

Belongs to the protein kinase superfamily. Alpha-type protein kinase family. ALPK subfamily.

The catalysed reaction is L-threonyl-[myosin heavy-chain] + ATP = O-phospho-L-threonyl-[myosin heavy-chain] + ADP + H(+). Functionally, phosphorylates threonine. Not critical for regulating the assembly and disassembly of myosin II filament. This Dictyostelium discoideum (Social amoeba) protein is Myosin heavy chain kinase D (mhkD).